Reading from the N-terminus, the 61-residue chain is MAKTSLKVKAARPQKFKVRAYNRCKLCGRPRAYMRKFGLCRHCFRKLAHEGQIPGIRKASW.

4 residues coordinate Zn(2+): Cys-24, Cys-27, Cys-40, and Cys-43.

It belongs to the universal ribosomal protein uS14 family. Zinc-binding uS14 subfamily. Part of the 30S ribosomal subunit. Contacts proteins S3 and S10. Zn(2+) serves as cofactor.

Its function is as follows. Binds 16S rRNA, required for the assembly of 30S particles and may also be responsible for determining the conformation of the 16S rRNA at the A site. The chain is Small ribosomal subunit protein uS14 from Symbiobacterium thermophilum (strain DSM 24528 / JCM 14929 / IAM 14863 / T).